A 391-amino-acid polypeptide reads, in one-letter code: NADH-quinone oxidoreductase subunit D (391 aa).

This sequence belongs to the complex I 49 kDa subunit family. In terms of assembly, NDH-1 is composed of 14 different subunits. Subunits NuoB, C, D, E, F, and G constitute the peripheral sector of the complex.

The protein localises to the cell inner membrane. The catalysed reaction is a quinone + NADH + 5 H(+)(in) = a quinol + NAD(+) + 4 H(+)(out). Its function is as follows. NDH-1 shuttles electrons from NADH, via FMN and iron-sulfur (Fe-S) centers, to quinones in the respiratory chain. The immediate electron acceptor for the enzyme in this species is believed to be ubiquinone. Couples the redox reaction to proton translocation (for every two electrons transferred, four hydrogen ions are translocated across the cytoplasmic membrane), and thus conserves the redox energy in a proton gradient. The sequence is that of NADH-quinone oxidoreductase subunit D from Pelagibacter ubique (strain HTCC1062).